The primary structure comprises 262 residues: Small ribosomal subunit protein uS2 (262 aa).

This sequence belongs to the universal ribosomal protein uS2 family.

In Rhodospirillum rubrum (strain ATCC 11170 / ATH 1.1.1 / DSM 467 / LMG 4362 / NCIMB 8255 / S1), this protein is Small ribosomal subunit protein uS2.